A 567-amino-acid polypeptide reads, in one-letter code: Probable serine/threonine-protein kinase WNK6 (567 aa).

The Protein kinase domain maps to 28–285 (IRYKEVIGKG…AKELLLDPFL (258 aa)). ATP contacts are provided by residues 108 to 111 (TELF) and Lys-158. Asp-175 serves as the catalytic Proton acceptor. A compositionally biased stretch (basic and acidic residues) spans 499-509 (VDATKGEDKSS). The disordered stretch occupies residues 499–528 (VDATKGEDKSSIQEVEEATEPVSLEEEERL). Positions 512–525 (EVEEATEPVSLEEE) are enriched in acidic residues. The stretch at 519 to 553 (PVSLEEEERLRQELEEIEAKYQEDMKEIATKREEA) forms a coiled coil.

Belongs to the protein kinase superfamily. Ser/Thr protein kinase family. WNK subfamily.

It catalyses the reaction L-seryl-[protein] + ATP = O-phospho-L-seryl-[protein] + ADP + H(+). The enzyme catalyses L-threonyl-[protein] + ATP = O-phospho-L-threonyl-[protein] + ADP + H(+). In terms of biological role, may regulate flowering time by modulating the photoperiod pathway. The polypeptide is Probable serine/threonine-protein kinase WNK6 (WNK6) (Arabidopsis thaliana (Mouse-ear cress)).